The sequence spans 208 residues: Small ribosomal subunit protein uS4 (208 aa).

The region spanning 95 to 161 is the S4 RNA-binding domain; that stretch reads MRLDALVLRA…VPLQVAAAGA (67 aa).

The protein belongs to the universal ribosomal protein uS4 family. In terms of assembly, part of the 30S ribosomal subunit. Contacts protein S5. The interaction surface between S4 and S5 is involved in control of translational fidelity.

Functionally, one of the primary rRNA binding proteins, it binds directly to 16S rRNA where it nucleates assembly of the body of the 30S subunit. Its function is as follows. With S5 and S12 plays an important role in translational accuracy. The protein is Small ribosomal subunit protein uS4 of Pseudarthrobacter chlorophenolicus (strain ATCC 700700 / DSM 12829 / CIP 107037 / JCM 12360 / KCTC 9906 / NCIMB 13794 / A6) (Arthrobacter chlorophenolicus).